The following is a 206-amino-acid chain: Venom allergen 5 (206 aa).

4 disulfide bridges follow: Cys-4/Cys-16, Cys-8/Cys-104, Cys-28/Cys-96, and Cys-172/Cys-189. The SCP domain maps to 48–191; it reads EEHNRFRQKV…MKIHYLICNY (144 aa).

The protein belongs to the CRISP family. Venom allergen 5-like subfamily. As to expression, expressed by the venom gland.

The protein resides in the secreted. In Polistes gallicus (Paper wasp), this protein is Venom allergen 5.